The following is a 336-amino-acid chain: Fructose-1,6-bisphosphatase class 1 (336 aa).

Mg(2+) contacts are provided by glutamate 98, aspartate 117, leucine 119, and aspartate 120. Substrate-binding positions include 120–123 (DGSS), asparagine 210, and lysine 276. Glutamate 282 is a Mg(2+) binding site.

The protein belongs to the FBPase class 1 family. As to quaternary structure, homotetramer. Mg(2+) serves as cofactor.

Its subcellular location is the cytoplasm. It carries out the reaction beta-D-fructose 1,6-bisphosphate + H2O = beta-D-fructose 6-phosphate + phosphate. It participates in carbohydrate biosynthesis; gluconeogenesis. The chain is Fructose-1,6-bisphosphatase class 1 from Caulobacter vibrioides (strain ATCC 19089 / CIP 103742 / CB 15) (Caulobacter crescentus).